The sequence spans 925 residues: Bifunctional uridylyltransferase/uridylyl-removing enzyme (925 aa).

The segment at 1-382 is uridylyltransferase; it reads MVLPTTKDAT…PPGAEVRRVP (382 aa). The segment at 383-738 is uridylyl-removing; the sequence is DSDDFIIDNN…VGFDEARGVT (356 aa). The 124-residue stretch at 498–621 folds into the HD domain; the sequence is VDEHLIRCIG…VQSVERMKLL (124 aa). ACT domains follow at residues 739 to 820 and 849 to 925; these read ELTI…DVMP and MIEV…NTAE.

Belongs to the GlnD family. Mg(2+) serves as cofactor.

It carries out the reaction [protein-PII]-L-tyrosine + UTP = [protein-PII]-uridylyl-L-tyrosine + diphosphate. The enzyme catalyses [protein-PII]-uridylyl-L-tyrosine + H2O = [protein-PII]-L-tyrosine + UMP + H(+). With respect to regulation, uridylyltransferase (UTase) activity is inhibited by glutamine, while glutamine activates uridylyl-removing (UR) activity. Modifies, by uridylylation and deuridylylation, the PII regulatory proteins (GlnB and homologs), in response to the nitrogen status of the cell that GlnD senses through the glutamine level. Under low glutamine levels, catalyzes the conversion of the PII proteins and UTP to PII-UMP and PPi, while under higher glutamine levels, GlnD hydrolyzes PII-UMP to PII and UMP (deuridylylation). Thus, controls uridylylation state and activity of the PII proteins, and plays an important role in the regulation of nitrogen assimilation and metabolism. The chain is Bifunctional uridylyltransferase/uridylyl-removing enzyme from Nitrobacter winogradskyi (strain ATCC 25391 / DSM 10237 / CIP 104748 / NCIMB 11846 / Nb-255).